Here is a 124-residue protein sequence, read N- to C-terminus: Fluoride-specific ion channel FluC (124 aa).

4 helical membrane passes run 4–24 (LIFV…ISIF), 35–55 (FGTL…YALG), 62–82 (PEIK…FSTF), and 102–122 (IALN…LVFS). 2 residues coordinate Na(+): Gly-74 and Thr-77.

Belongs to the fluoride channel Fluc/FEX (TC 1.A.43) family.

The protein localises to the cell inner membrane. The catalysed reaction is fluoride(in) = fluoride(out). Its activity is regulated as follows. Na(+) is not transported, but it plays an essential structural role and its presence is essential for fluoride channel function. Functionally, fluoride-specific ion channel. Important for reducing fluoride concentration in the cell, thus reducing its toxicity. This chain is Fluoride-specific ion channel FluC, found in Shewanella loihica (strain ATCC BAA-1088 / PV-4).